Consider the following 370-residue polypeptide: Subtilisin-like protease (370 aa).

An N-terminal signal peptide occupies residues 1–17; sequence MIASIVFFIVLVDGVAT. Catalysis depends on charge relay system residues D13, H35, and S190. One can recognise a Peptidase S8 domain in the interval 18 to 261; it reads GSPNALVTDF…FGEVSPSRLE (244 aa). Positions 240 to 370 constitute a P/Homo B domain; that stretch reads RVTDRWTHRN…TTEGTCHGIR (131 aa).

Belongs to the peptidase S8 family.

This chain is Subtilisin-like protease (ORF47), found in Ictalurid herpesvirus 1 (strain Auburn) (IcHV-1).